We begin with the raw amino-acid sequence, 287 residues long: MATIATMPVPETRANHTIYINNLNEKIKKDELKKSLYAIFSQFGQILDILVSRIMKMRGQAFVIFKEVTSATNALRSMQGFPFYDKPMRIQYAKTDSDIIAKMKGTYVERDRKREKRKPKSQETPAAKKAVQGGAAAPVVGAVQPVPGMPPMPQAPRIMHHMPGQPPYMPPPGMIPPPGLAPGQIPPGAMPPQQLMPGQMPPAQPLSENPPNHILFLTNLPEETNELMLSMLFNQFPGFKEVRLVPGRHDIAFVEFDNEVQAGAARDALQGFKITQNNAMKISFAKK.

Residues His16–Thr95 enclose the RRM 1 domain. Lys66 carries the post-translational modification N6-acetyllysine. The segment at Thr106–Gly134 is disordered. The segment covering Pro125 to Gly134 has biased composition (low complexity). An Omega-N-methylarginine modification is found at Arg157. The region spanning His213–Lys287 is the RRM 2 domain.

Belongs to the RRM U1 A/B'' family. As to quaternary structure, U1 snRNP is composed of the 7 core Sm proteins SNRPB, SNRPD1, SNRPD2, SNRPD3, SNRPE, SNRPF and SNRPG that assemble in a heptameric protein ring on the Sm site of the small nuclear RNA to form the core snRNP, and at least three U1 snRNP-specific proteins SNRNP70/U1-70K, SNRPA/U1-A and SNRPC/U1-C. Interacts with SFPQ; component of a snRNP-free complex with SFPQ. Interacts with IVNS1ABP (via BACK domain); the interaction is indirect.

It is found in the nucleus. Functionally, component of the spliceosomal U1 snRNP, which is essential for recognition of the pre-mRNA 5' splice-site and the subsequent assembly of the spliceosome. U1 snRNP is the first snRNP to interact with pre-mRNA. This interaction is required for the subsequent binding of U2 snRNP and the U4/U6/U5 tri-snRNP. SNRPA binds stem loop II of U1 snRNA. In a snRNP-free form (SF-A) may be involved in coupled pre-mRNA splicing and polyadenylation process. May bind preferentially to the 5'-UGCAC-3' motif on RNAs. This is U1 small nuclear ribonucleoprotein A (Snrpa) from Mus musculus (Mouse).